The sequence spans 229 residues: Cytochrome c oxidase subunit 2 (229 aa).

At 1 to 26 (MSTWANLGLQDSASPLMEQLIFFHDH) the chain is on the mitochondrial intermembrane side. A helical membrane pass occupies residues 27-48 (ALLILVMITVLVGYLMFMLFFN). Topologically, residues 49–62 (SYVNRFLLHGQLIE) are mitochondrial matrix. Residues 63–82 (MIWTILPAIILLFIAMPSLR) form a helical membrane-spanning segment. Topologically, residues 83–229 (LLYLLDEINE…IKWISNSVNS (147 aa)) are mitochondrial intermembrane. His161, Cys196, Glu198, Cys200, His204, and Met207 together coordinate Cu cation. Residue Glu198 participates in Mg(2+) binding.

The protein belongs to the cytochrome c oxidase subunit 2 family. As to quaternary structure, component of the cytochrome c oxidase (complex IV, CIV), a multisubunit enzyme composed of a catalytic core of 3 subunits and several supernumerary subunits. The complex exists as a monomer or a dimer and forms supercomplexes (SCs) in the inner mitochondrial membrane with ubiquinol-cytochrome c oxidoreductase (cytochrome b-c1 complex, complex III, CIII). It depends on Cu cation as a cofactor.

It localises to the mitochondrion inner membrane. The catalysed reaction is 4 Fe(II)-[cytochrome c] + O2 + 8 H(+)(in) = 4 Fe(III)-[cytochrome c] + 2 H2O + 4 H(+)(out). Component of the cytochrome c oxidase, the last enzyme in the mitochondrial electron transport chain which drives oxidative phosphorylation. The respiratory chain contains 3 multisubunit complexes succinate dehydrogenase (complex II, CII), ubiquinol-cytochrome c oxidoreductase (cytochrome b-c1 complex, complex III, CIII) and cytochrome c oxidase (complex IV, CIV), that cooperate to transfer electrons derived from NADH and succinate to molecular oxygen, creating an electrochemical gradient over the inner membrane that drives transmembrane transport and the ATP synthase. Cytochrome c oxidase is the component of the respiratory chain that catalyzes the reduction of oxygen to water. Electrons originating from reduced cytochrome c in the intermembrane space (IMS) are transferred via the dinuclear copper A center (CU(A)) of subunit 2 and heme A of subunit 1 to the active site in subunit 1, a binuclear center (BNC) formed by heme A3 and copper B (CU(B)). The BNC reduces molecular oxygen to 2 water molecules using 4 electrons from cytochrome c in the IMS and 4 protons from the mitochondrial matrix. In Drosophila miranda (Fruit fly), this protein is Cytochrome c oxidase subunit 2 (mt:CoII).